The following is a 425-amino-acid chain: Histidine--tRNA ligase (425 aa).

This sequence belongs to the class-II aminoacyl-tRNA synthetase family. Homodimer.

It is found in the cytoplasm. The catalysed reaction is tRNA(His) + L-histidine + ATP = L-histidyl-tRNA(His) + AMP + diphosphate + H(+). This chain is Histidine--tRNA ligase, found in Listeria monocytogenes serovar 1/2a (strain ATCC BAA-679 / EGD-e).